The following is a 186-amino-acid chain: UPF0200 protein PH1008 (186 aa).

7-14 (GMPGSGKG) is an ATP binding site.

Belongs to the UPF0200 family.

The protein is UPF0200 protein PH1008 of Pyrococcus horikoshii (strain ATCC 700860 / DSM 12428 / JCM 9974 / NBRC 100139 / OT-3).